Consider the following 443-residue polypeptide: ATP-dependent protease ATPase subunit HslU (443 aa).

ATP-binding positions include isoleucine 18, glycine 60 to glutamate 65, aspartate 256, glutamate 321, and arginine 393.

Belongs to the ClpX chaperone family. HslU subfamily. As to quaternary structure, a double ring-shaped homohexamer of HslV is capped on each side by a ring-shaped HslU homohexamer. The assembly of the HslU/HslV complex is dependent on binding of ATP.

It localises to the cytoplasm. Functionally, ATPase subunit of a proteasome-like degradation complex; this subunit has chaperone activity. The binding of ATP and its subsequent hydrolysis by HslU are essential for unfolding of protein substrates subsequently hydrolyzed by HslV. HslU recognizes the N-terminal part of its protein substrates and unfolds these before they are guided to HslV for hydrolysis. This chain is ATP-dependent protease ATPase subunit HslU, found in Yersinia pestis bv. Antiqua (strain Antiqua).